Reading from the N-terminus, the 449-residue chain is UDP-glycosyltransferase 76E7 (449 aa).

Residues Ser-275, 333-335 (APQ), 350-358 (HCGWNSTLE), and 372-375 (TTDQ) contribute to the UDP-alpha-D-glucose site.

This sequence belongs to the UDP-glycosyltransferase family.

This chain is UDP-glycosyltransferase 76E7 (UGT76E7), found in Arabidopsis thaliana (Mouse-ear cress).